The primary structure comprises 907 residues: Glutamate receptor 1 (907 aa).

Positions 1–18 (MPYIFAFFCTGFLGAVVG) are cleaved as a signal peptide. Topologically, residues 19 to 536 (ANFPNNIQIG…GVFSFLDPLA (518 aa)) are extracellular. N-linked (GlcNAc...) asparagine glycosylation is found at asparagine 63, asparagine 249, asparagine 257, asparagine 363, asparagine 401, and asparagine 406. Cysteine 75 and cysteine 323 are oxidised to a cystine. Residues proline 492, threonine 494, and arginine 499 each coordinate L-glutamate. A helical membrane pass occupies residues 537–557 (YEIWMCIVFAYIGVSVVLFLV). Topologically, residues 558–584 (SRFSPYEWHSEEFEEGRDQTTSDQSNE) are cytoplasmic. Positions 585-600 (FGIFNSLWFSLGAFMQ) form an intramembrane region, helical; Pore-forming. The stretch at 601 to 603 (QGC) is an intramembrane region. Cysteine 603 carries the S-palmitoyl cysteine lipid modification. The Cytoplasmic segment spans residues 604-609 (DISPRS). Residues 610-630 (LSGRIVGGVWWFFTLIIISSY) traverse the membrane as a helical segment. Residues 631-805 (TANLAAFLTV…DKTSALSLSN (175 aa)) are Extracellular-facing. Serine 645 is modified (phosphoserine). 2 residues coordinate L-glutamate: serine 668 and threonine 669. Serine 710 is subject to Phosphoserine. L-glutamate is bound at residue glutamate 719. Residues cysteine 732 and cysteine 787 are joined by a disulfide bond. A helical transmembrane segment spans residues 806-826 (VAGVFYILIGGLGLAMLVALI). Residues 827-907 (EFCYKSRSES…SGMPLGATGL (81 aa)) are Cytoplasmic-facing. Cysteine 829 carries the S-palmitoyl cysteine lipid modification. Serine 849 and serine 863 each carry phosphoserine. The tract at residues 857–881 (STLPRNSGAGASGGSGSGENGRVVS) is disordered. A compositionally biased stretch (gly residues) spans 866–875 (GASGGSGSGE). Residues 904-907 (ATGL) carry the PDZ-binding motif.

It belongs to the glutamate-gated ion channel (TC 1.A.10.1) family. GRIA1 subfamily. In terms of assembly, homotetramer or heterotetramer of pore-forming glutamate receptor subunits. Heteromeric assembly can be the result of both receptor subtype and flip or flop form and according the composition, one partner can be dominant with respect to the fast desensitizing current component, whereas the other can determine the steady-state component. Tetramers may be formed by the dimerization of dimers. Found in a complex with GRIA2, GRIA3, GRIA4, CNIH2, CNIH3, CACNG2, CACNG3, CACNG4, CACNG5, CACNG7 and CACNG8. Interacts with HIP1 and RASGRF2. Interacts with SYNDIG1 and GRIA2. Interacts with DLG1 (via C-terminus). Interacts with LRFN1. Interacts with PRKG2. Interacts with CNIH2 and CACNG2. Interacts with CACNG5; this interaction modulates the gating. Interacts (via C-terminus) with PDLIM4 (via LIM domain); this interaction as well as the interaction of PDLIM4 with alpha-actinin is required for their colocalization in early endosomes. Interacts with SNX27 (via PDZ domain); the interaction is required for recycling to the plasma membrane when endocytosed and prevent degradation in lysosomes. Interacts (via PDZ-binding motif) with SHANK3 (via PDZ domain). Interacts with CACNG3; associates GRIA1 with the adapter protein complex 4 (AP-4) to target GRIA1 to the somatodendritic compartment of neurons. Interacts with CACNG2; this interaction mediates traffick to the plasma membrane and modulation of desensitization. Interacts with CNIH2 and CNIH3; this interaction promotes expression at the plasma membrane and extensively modulates their gating properties by slowing deactivation and desensitization kinetics. Found in a complex with GRIA2, GRIA3, GRIA4, DLG4, CACNG8 and CNIH2. Phosphorylated at Ser-645. Phosphorylated at Ser-710 by PKC. Phosphorylated at Ser-849 by PKC, PKA and CAMK2. Phosphorylated at Ser-863 by PKC, PKA and PRKG2. Phosphorylation of Ser-863 is reduced by induction of long-term depression and increased by induction of long-term potentiation. In terms of processing, palmitoylated. Depalmitoylated by CPT1C and upon L-glutamate stimulation. ZDHHC3/GODZ specifically palmitoylates Cys-603, which leads to Golgi retention and decreased cell surface expression. In contrast, Cys-829 palmitoylation does not affect cell surface expression but regulates stimulation-dependent endocytosis. Expressed in the outer plexiform layer of the retina of the eye (at protein level). Expressed in the forebrain and hippocampus (at protein level).

Its subcellular location is the cell membrane. The protein localises to the endoplasmic reticulum membrane. It localises to the postsynaptic cell membrane. It is found in the postsynaptic density membrane. The protein resides in the cell projection. Its subcellular location is the dendrite. The protein localises to the dendritic spine. It localises to the early endosome membrane. It is found in the recycling endosome membrane. The protein resides in the presynapse. Its subcellular location is the synapse. The enzyme catalyses Ca(2+)(in) = Ca(2+)(out). It carries out the reaction Na(+)(in) = Na(+)(out). It catalyses the reaction Mg(2+)(in) = Mg(2+)(out). The catalysed reaction is Li(+)(in) = Li(+)(out). The enzyme catalyses K(+)(in) = K(+)(out). It carries out the reaction Sr(2+)(in) = Sr(2+)(out). Ionotropic glutamate receptor that functions as a ligand-gated cation channel, gated by L-glutamate and glutamatergic agonists such as alpha-amino-3-hydroxy-5-methyl-4-isoxazolepropionic acid (AMPA), quisqualic acid, and kainic acid. L-glutamate acts as an excitatory neurotransmitter at many synapses in the central nervous system. Binding of the excitatory neurotransmitter L-glutamate induces a conformation change, leading to the opening of the cation channel, and thereby converts the chemical signal to an electrical impulse upon entry of monovalent and divalent cations such as sodium and calcium. The receptor then desensitizes rapidly and enters in a transient inactive state, characterized by the presence of bound agonist. In the presence of CACNG2 or CACNG4 or CACNG7 or CACNG8, shows resensitization which is characterized by a delayed accumulation of current flux upon continued application of L-glutamate. Calcium (Ca(2+)) permeability depends on subunits composition and, heteromeric channels containing edited GRIA2 subunit are calcium-impermeable. Also permeable to other divalents cations such as strontium(2+) and magnesium(2+) and monovalent cations such as potassium(1+) and lithium(1+). This chain is Glutamate receptor 1, found in Mus musculus (Mouse).